The chain runs to 164 residues: uncharacterized protein (164 aa).

This is an uncharacterized protein from Methanocaldococcus jannaschii (strain ATCC 43067 / DSM 2661 / JAL-1 / JCM 10045 / NBRC 100440) (Methanococcus jannaschii).